Here is a 142-residue protein sequence, read N- to C-terminus: Large ribosomal subunit protein uL16 (142 aa).

Belongs to the universal ribosomal protein uL16 family. Part of the 50S ribosomal subunit.

Binds 23S rRNA and is also seen to make contacts with the A and possibly P site tRNAs. This is Large ribosomal subunit protein uL16 from Thermotoga maritima (strain ATCC 43589 / DSM 3109 / JCM 10099 / NBRC 100826 / MSB8).